Reading from the N-terminus, the 143-residue chain is Small ribosomal subunit protein uS12 (143 aa).

Residues M1 to E19 are compositionally biased toward basic residues. The segment at M1–R21 is disordered. Position 62 is a hydroxyproline (P62).

Belongs to the universal ribosomal protein uS12 family. In terms of assembly, component of the 40S small ribosomal subunit.

It localises to the cytoplasm. It is found in the cytosol. Its subcellular location is the rough endoplasmic reticulum. The sequence is that of Small ribosomal subunit protein uS12 (RpS23) from Papilio dardanus (African swallowtail butterfly).